We begin with the raw amino-acid sequence, 932 residues long: Protocadherin gamma-A12 (932 aa).

The signal sequence occupies residues 1–29 (MIPARLHRDYKGLVLLGILLGTLWETGCT). 6 Cadherin domains span residues 30 to 133 (QIRY…APYF), 134 to 242 (RESE…APAF), 243 to 347 (AQPE…APEV), 348 to 452 (VLTS…PPVF), 453 to 562 (PQAS…APEI), and 570 to 683 (DGST…SPAN). Residues 30–692 (QIRYSVPEEL…NSETSDLTLY (663 aa)) lie on the Extracellular side of the membrane. N-linked (GlcNAc...) asparagine glycans are attached at residues Asn-265, Asn-419, and Asn-545. Residues 693-713 (LVVAVAAVSCVFLAFVILLLA) traverse the membrane as a helical segment. Residues 714–932 (LRLRRWHKSR…KKKSGKKEKK (219 aa)) are Cytoplasmic-facing. 2 disordered regions span residues 803–841 (GHGL…WPNN) and 902–932 (ATLT…KEKK). The segment covering 816 to 841 (WRFSQAQRPGTSGSQNGDDTGTWPNN) has biased composition (polar residues). Positions 922–932 (NKKKSGKKEKK) are enriched in basic residues.

It localises to the cell membrane. In terms of biological role, potential calcium-dependent cell-adhesion protein. May be involved in the establishment and maintenance of specific neuronal connections in the brain. The chain is Protocadherin gamma-A12 (PCDHGA12) from Pan troglodytes (Chimpanzee).